The sequence spans 230 residues: Cytochrome c oxidase subunit 2 (230 aa).

The Mitochondrial intermembrane portion of the chain corresponds to 1-14 (MAYPLQLGFQDATS). Residues 15–45 (PIMEELLHFHDHTLMIVFLISSLVLYIISTM) traverse the membrane as a helical segment. The Mitochondrial matrix segment spans residues 46–59 (LTTKLTHTNTMDAQ). A helical membrane pass occupies residues 60 to 87 (EVETIWTILPAIILILIALPSLRILYMM). Residues 88 to 230 (DEINNPNLTI…NWTSSMMSTS (143 aa)) lie on the Mitochondrial intermembrane side of the membrane. Residues H161, C196, E198, C200, H204, and M207 each contribute to the Cu cation site. Residue E198 participates in Mg(2+) binding. Residue Y218 is modified to Phosphotyrosine.

The protein belongs to the cytochrome c oxidase subunit 2 family. As to quaternary structure, component of the cytochrome c oxidase (complex IV, CIV), a multisubunit enzyme composed of 14 subunits. The complex is composed of a catalytic core of 3 subunits MT-CO1, MT-CO2 and MT-CO3, encoded in the mitochondrial DNA, and 11 supernumerary subunits COX4I, COX5A, COX5B, COX6A, COX6B, COX6C, COX7A, COX7B, COX7C, COX8 and NDUFA4, which are encoded in the nuclear genome. The complex exists as a monomer or a dimer and forms supercomplexes (SCs) in the inner mitochondrial membrane with NADH-ubiquinone oxidoreductase (complex I, CI) and ubiquinol-cytochrome c oxidoreductase (cytochrome b-c1 complex, complex III, CIII), resulting in different assemblies (supercomplex SCI(1)III(2)IV(1) and megacomplex MCI(2)III(2)IV(2)). Found in a complex with TMEM177, COA6, COX18, COX20, SCO1 and SCO2. Interacts with TMEM177 in a COX20-dependent manner. Interacts with COX20. Interacts with COX16. The cofactor is Cu cation.

The protein localises to the mitochondrion inner membrane. The catalysed reaction is 4 Fe(II)-[cytochrome c] + O2 + 8 H(+)(in) = 4 Fe(III)-[cytochrome c] + 2 H2O + 4 H(+)(out). Component of the cytochrome c oxidase, the last enzyme in the mitochondrial electron transport chain which drives oxidative phosphorylation. The respiratory chain contains 3 multisubunit complexes succinate dehydrogenase (complex II, CII), ubiquinol-cytochrome c oxidoreductase (cytochrome b-c1 complex, complex III, CIII) and cytochrome c oxidase (complex IV, CIV), that cooperate to transfer electrons derived from NADH and succinate to molecular oxygen, creating an electrochemical gradient over the inner membrane that drives transmembrane transport and the ATP synthase. Cytochrome c oxidase is the component of the respiratory chain that catalyzes the reduction of oxygen to water. Electrons originating from reduced cytochrome c in the intermembrane space (IMS) are transferred via the dinuclear copper A center (CU(A)) of subunit 2 and heme A of subunit 1 to the active site in subunit 1, a binuclear center (BNC) formed by heme A3 and copper B (CU(B)). The BNC reduces molecular oxygen to 2 water molecules using 4 electrons from cytochrome c in the IMS and 4 protons from the mitochondrial matrix. In Ornithorhynchus anatinus (Duckbill platypus), this protein is Cytochrome c oxidase subunit 2 (MT-CO2).